Reading from the N-terminus, the 345-residue chain is Thylakoid lumenal 29 kDa protein, chloroplastic (345 aa).

This sequence belongs to the peroxidase family.

Its subcellular location is the plastid. It is found in the chloroplast thylakoid lumen. The chain is Thylakoid lumenal 29 kDa protein, chloroplastic (CLEB3J9) from Solanum lycopersicum (Tomato).